The following is a 416-amino-acid chain: 3-isopropylmalate dehydratase large subunit 2 (416 aa).

[4Fe-4S] cluster-binding residues include Cys296, Cys356, and Cys359.

This sequence belongs to the aconitase/IPM isomerase family. LeuC type 2 subfamily. In terms of assembly, heterodimer of LeuC and LeuD. The cofactor is [4Fe-4S] cluster.

It carries out the reaction (2R,3S)-3-isopropylmalate = (2S)-2-isopropylmalate. The protein operates within amino-acid biosynthesis; L-leucine biosynthesis; L-leucine from 3-methyl-2-oxobutanoate: step 2/4. Catalyzes the isomerization between 2-isopropylmalate and 3-isopropylmalate, via the formation of 2-isopropylmaleate. The polypeptide is 3-isopropylmalate dehydratase large subunit 2 (Archaeoglobus fulgidus (strain ATCC 49558 / DSM 4304 / JCM 9628 / NBRC 100126 / VC-16)).